Reading from the N-terminus, the 105-residue chain is Met repressor (105 aa).

It belongs to the MetJ family. As to quaternary structure, homodimer.

It is found in the cytoplasm. In terms of biological role, this regulatory protein, when combined with SAM (S-adenosylmethionine) represses the expression of the methionine regulon and of enzymes involved in SAM synthesis. This Citrobacter koseri (strain ATCC BAA-895 / CDC 4225-83 / SGSC4696) protein is Met repressor.